A 405-amino-acid chain; its full sequence is Argininosuccinate synthase (405 aa).

ATP-binding positions include 10 to 18 and A37; that span reads AYSGGLDTS. L-citrulline-binding residues include Y88 and S93. G118 is a binding site for ATP. The L-aspartate site is built by T120, N124, and D125. N124 is an L-citrulline binding site. The L-citrulline site is built by R128, S179, S188, E264, and Y276.

Belongs to the argininosuccinate synthase family. Type 1 subfamily. As to quaternary structure, homotetramer.

The protein resides in the cytoplasm. The enzyme catalyses L-citrulline + L-aspartate + ATP = 2-(N(omega)-L-arginino)succinate + AMP + diphosphate + H(+). Its pathway is amino-acid biosynthesis; L-arginine biosynthesis; L-arginine from L-ornithine and carbamoyl phosphate: step 2/3. This chain is Argininosuccinate synthase, found in Pseudomonas syringae pv. tomato (strain ATCC BAA-871 / DC3000).